The chain runs to 429 residues: Glutamate-1-semialdehyde 2,1-aminomutase (429 aa).

Lysine 265 bears the N6-(pyridoxal phosphate)lysine mark.

It belongs to the class-III pyridoxal-phosphate-dependent aminotransferase family. HemL subfamily. As to quaternary structure, homodimer. The cofactor is pyridoxal 5'-phosphate.

Its subcellular location is the cytoplasm. The enzyme catalyses (S)-4-amino-5-oxopentanoate = 5-aminolevulinate. It functions in the pathway porphyrin-containing compound metabolism; protoporphyrin-IX biosynthesis; 5-aminolevulinate from L-glutamyl-tRNA(Glu): step 2/2. The polypeptide is Glutamate-1-semialdehyde 2,1-aminomutase (Chromohalobacter salexigens (strain ATCC BAA-138 / DSM 3043 / CIP 106854 / NCIMB 13768 / 1H11)).